The following is a 123-amino-acid chain: Small ribosomal subunit protein uS12c (123 aa).

The segment covering 1–20 (MPTIQQLIRNTRQPTQNRTK) has biased composition (polar residues). The interval 1–27 (MPTIQQLIRNTRQPTQNRTKSPALKAC) is disordered.

The protein belongs to the universal ribosomal protein uS12 family. Part of the 30S ribosomal subunit.

It localises to the plastid. The protein resides in the chloroplast. In terms of biological role, with S4 and S5 plays an important role in translational accuracy. Located at the interface of the 30S and 50S subunits. This is Small ribosomal subunit protein uS12c (rps12) from Zygnema circumcarinatum (Green alga).